The primary structure comprises 457 residues: Peptidyl-prolyl cis-trans isomerase FKBP5 (457 aa).

The residue at position 1 (methionine 1) is an N-acetylmethionine. Over residues methionine 1–arginine 11 the composition is skewed to basic and acidic residues. A disordered region spans residues methionine 1–lysine 28. Residue lysine 28 is modified to N6-acetyllysine. PPIase FKBP-type domains are found at residues glycine 50–lysine 138 and glycine 165–glutamate 251. 3 TPR repeats span residues alanine 268–glutamate 301, leucine 317–asparagine 350, and glutamate 351–asparagine 384. The tract at residues glutamate 424–valine 457 is disordered. A Phosphoserine modification is found at serine 445. The segment covering alanine 447–valine 457 has biased composition (basic and acidic residues).

Part of a heteromultimeric cytoplasmic complex with HSP90AA1, HSPA1A/HSPA1B and steroid receptors. Upon ligand binding dissociates from the complex and FKBP4 takes its place. Interacts with functionally mature heterooligomeric progesterone receptor complexes along with HSP90 and TEBP. Interacts with NR3C1. Interacts with Akt/AKT1 and PHLPP1; enhancing dephosphorylation and subsequent activation of Akt/AKT1. Interacts with IFI44L; this interaction modulates the kinase activity of IKBKB and IKBKE. Interacts with IKBKB and IKBKE. In terms of processing, acetylation impairs ability to promote interaction between Akt/AKT1 and PHLPP1. Deacetylation by SIRT7 promotes interaction between Akt/AKT1 and PHLPP1, leading to suppress Akt/AKT1 activation. Post-translationally, ubiquitinated, leading to degradation in a proteasome-dependent manner. Deubiquitinated by USP49, leading to stabilization.

It is found in the cytoplasm. The protein resides in the nucleus. It catalyses the reaction [protein]-peptidylproline (omega=180) = [protein]-peptidylproline (omega=0). With respect to regulation, inhibited by both FK506 and rapamycin. Its function is as follows. Immunophilin protein with PPIase and co-chaperone activities. Component of unligated steroid receptors heterocomplexes through interaction with heat-shock protein 90 (HSP90). Plays a role in the intracellular trafficking of heterooligomeric forms of steroid hormone receptors maintaining the complex into the cytoplasm when unliganded. Acts as a regulator of Akt/AKT1 activity by promoting the interaction between Akt/AKT1 and PHLPP1, thereby enhancing dephosphorylation and subsequent activation of Akt/AKT1. Interacts with IKBKE and IKBKB which facilitates IKK complex assembly leading to increased IKBKE and IKBKB kinase activity, NF-kappaB activation, and IFN production. The protein is Peptidyl-prolyl cis-trans isomerase FKBP5 (FKBP5) of Saguinus oedipus (Cotton-top tamarin).